Consider the following 970-residue polypeptide: MTLVYEKSSFVLIMAQIAEAQNIMTRSTSSNDLLSTSAGSPPSPTSAAILLSSSPSPTITIASLPSGLNIVSNPNGNPAINVVLLNVNLNKEEEKMTLGQLLACFPEVPSNIPIQLNPNQHKLRRDTIVSQPVITSKQSSLFETSKQSNIPLSASVTNLQTLNKEKENYNLLNSSTNSLHSLIITPPTSNNTSSNNFVGGNIINSSSEDSILPPPHIITTTTTTTTSLPPRSPMPLPSSNCINIPNNINIPDNISESSTCSLSSNASNNYPQSPPKYNNFEINQNNNNSISLSKSQSLDNILTNSNNNNNNEITISSNIPIPLPPQSSSPPPTRNNQSSPSPSSPQQQNIMPTPPSTSLTPPQSPTLSPSSSTHSTPTQTTTTIKLPPSSPPSTISQNNARKTQIPTTTTTTTTTTTTTSTTSTTSPNPVVNNKNLNTPSSSFSPTKRLTIAFGSLTRSSNTPPPESSIVPIRWEINLNQIKIASTSTSNTNTVSSQNLINSSNTNNNNNNNNNNNNNNNNNNNNNNNNNNNNNSGNNNNNNNNNNNNNNQLYEQYYKLCKGEFQQNTSLYNKTFNQLLDVDINTSLSLLDKCYDSILKSNGIGLLSSKDQYLSTQSKEKDPNRVKSLLSVVKNAVSEDILNVKPSKTMLYFSNFGKTIPINLEVIDECILNNFSSKKVKFKVLMGPPSKTHTINVSEKEGFIGKKSSITLNFSLILKSSIKLRRVVIIEIEGGVRYFILVQVESNKTAFGQPIEDSELVEDNTSFGPMLVPRALVILKQAFFGCNAHLTESIFRLPPANDSEYNIVKDRVNREAIGTTEPHCIATLIKVFFRELPNLLLNDIDPEIFLNFKPTAQSADTASSAATANSSSSGSGNGNSSPNNDDPTMDPVFIVNLIEEKRRSTFLWLVDLLAEVTKFESSNKMNSKSLSIIFSPNLYFAPSICSAENSFAISGKVVSFILELIQFNKSL.

An N-terminal signal peptide occupies residues 1 to 20 (MTLVYEKSSFVLIMAQIAEA). Disordered stretches follow at residues 30–49 (SNDL…SAAI), 258–285 (STCS…INQN), 312–446 (EITI…FSPT), 487–550 (STSN…NNNN), and 860–886 (TASS…NDDP). Low complexity-rich tracts occupy residues 35-49 (STSA…SAAI) and 258-269 (STCSLSSNASNN). Over residues 321–333 (IPLPPQSSSPPPT) the composition is skewed to pro residues. A compositionally biased stretch (low complexity) spans 334–383 (RNNQSSPSPSSPQQQNIMPTPPSTSLTPPQSPTLSPSSSTHSTPTQTTTT). A compositionally biased stretch (polar residues) spans 392 to 406 (PSTISQNNARKTQIP). Positions 407-426 (TTTTTTTTTTTTTSTTSTTS) are enriched in low complexity. Over residues 427–446 (PNPVVNNKNLNTPSSSFSPT) the composition is skewed to polar residues. Positions 754 to 970 (IEDSELVEDN…LELIQFNKSL (217 aa)) constitute a Rho-GAP domain. Positions 860–885 (TASSAATANSSSSGSGNGNSSPNNDD) are enriched in low complexity.

The protein localises to the cytoplasm. Functionally, rho GTPase-activating protein involved in the signal transduction pathway. The protein is Rho GTPase-activating protein gacK (gacK) of Dictyostelium discoideum (Social amoeba).